Here is a 256-residue protein sequence, read N- to C-terminus: Enolase-phosphatase E1 (256 aa).

Positions 14 and 16 each coordinate Mg(2+). Residues 142–143 and Lys176 each bind substrate; that span reads SS. Position 201 (Asp201) interacts with Mg(2+).

This sequence belongs to the HAD-like hydrolase superfamily. MasA/MtnC family. In terms of assembly, monomer. Mg(2+) serves as cofactor.

It is found in the cytoplasm. It localises to the nucleus. The enzyme catalyses 5-methylsulfanyl-2,3-dioxopentyl phosphate + H2O = 1,2-dihydroxy-5-(methylsulfanyl)pent-1-en-3-one + phosphate. The protein operates within amino-acid biosynthesis; L-methionine biosynthesis via salvage pathway; L-methionine from S-methyl-5-thio-alpha-D-ribose 1-phosphate: step 3/6. Its pathway is amino-acid biosynthesis; L-methionine biosynthesis via salvage pathway; L-methionine from S-methyl-5-thio-alpha-D-ribose 1-phosphate: step 4/6. Bifunctional enzyme that catalyzes the enolization of 2,3-diketo-5-methylthiopentyl-1-phosphate (DK-MTP-1-P) into the intermediate 2-hydroxy-3-keto-5-methylthiopentenyl-1-phosphate (HK-MTPenyl-1-P), which is then dephosphorylated to form the acireductone 1,2-dihydroxy-3-keto-5-methylthiopentene (DHK-MTPene). The protein is Enolase-phosphatase E1 of Drosophila erecta (Fruit fly).